The primary structure comprises 377 residues: Ribosomal RNA large subunit methyltransferase G (377 aa).

The protein belongs to the methyltransferase superfamily. RlmG family.

The protein resides in the cytoplasm. The enzyme catalyses guanosine(1835) in 23S rRNA + S-adenosyl-L-methionine = N(2)-methylguanosine(1835) in 23S rRNA + S-adenosyl-L-homocysteine + H(+). Functionally, specifically methylates the guanine in position 1835 (m2G1835) of 23S rRNA. This chain is Ribosomal RNA large subunit methyltransferase G, found in Shewanella oneidensis (strain ATCC 700550 / JCM 31522 / CIP 106686 / LMG 19005 / NCIMB 14063 / MR-1).